The chain runs to 350 residues: GDSL esterase/lipase At2g04570 (350 aa).

The signal sequence occupies residues 1–23; it reads MGHLKSLFTILFLIAMSSTVTFA. S35 (nucleophile) is an active-site residue. N-linked (GlcNAc...) asparagine glycosylation is found at N98 and N117. Active-site residues include D325 and H328. N-linked (GlcNAc...) asparagine glycosylation occurs at N343.

Belongs to the 'GDSL' lipolytic enzyme family.

The protein resides in the secreted. This Arabidopsis thaliana (Mouse-ear cress) protein is GDSL esterase/lipase At2g04570.